The primary structure comprises 393 residues: Glutamyl-tRNA reductase (393 aa).

Substrate-binding positions include 47-50 (TCSR), serine 98, 103-105 (ETD), and glutamine 109. The active-site Nucleophile is cysteine 48. Residue 177–182 (GAGAVG) participates in NADP(+) binding.

The protein belongs to the glutamyl-tRNA reductase family. Homodimer.

The enzyme catalyses (S)-4-amino-5-oxopentanoate + tRNA(Glu) + NADP(+) = L-glutamyl-tRNA(Glu) + NADPH + H(+). It participates in porphyrin-containing compound metabolism; protoporphyrin-IX biosynthesis; 5-aminolevulinate from L-glutamyl-tRNA(Glu): step 1/2. Catalyzes the NADPH-dependent reduction of glutamyl-tRNA(Glu) to glutamate 1-semialdehyde (GSA). This chain is Glutamyl-tRNA reductase, found in Pyrobaculum neutrophilum (strain DSM 2338 / JCM 9278 / NBRC 100436 / V24Sta) (Thermoproteus neutrophilus).